The chain runs to 560 residues: Serine palmitoyltransferase 2 (560 aa).

Residues 65 to 85 (PMLVAVLTYVGYGVLTLFGYL) form a helical membrane-spanning segment. Lysine 377 is modified (N6-(pyridoxal phosphate)lysine).

The protein belongs to the class-II pyridoxal-phosphate-dependent aminotransferase family. Component of the serine palmitoyltransferase (SPT) complex, which is composed of SPTLC1, SPTLC2 or SPTLC3 and SPTSSA or SPTSSB. The heterodimer consisting of SPTLC1 and SPTLC2/SPTLC3 forms the catalytic core of the enzyme, while SPTSSA or SPTSSB subunits determine substrate specificity. SPT also interacts with ORMDL proteins, especially ORMDL3, which negatively regulate SPT activity in the presence of ceramides. Forms dimers of heterodimers with SPTLC1. The cofactor is pyridoxal 5'-phosphate. As to expression, expressed in a variety of tissues. Expressed in brains cortices (at protein level). Expressed in brown and white adipose tissues. Expressed in liver.

The protein localises to the endoplasmic reticulum membrane. The enzyme catalyses L-serine + hexadecanoyl-CoA + H(+) = 3-oxosphinganine + CO2 + CoA. It catalyses the reaction octadecanoyl-CoA + L-serine + H(+) = 3-oxoeicosasphinganine + CO2 + CoA. Its pathway is lipid metabolism; sphingolipid metabolism. Its activity is regulated as follows. SPT complex catalytic activity is negatively regulated by ORMDL proteins, including ORMDL3, in the presence of ceramides. This mechanism allows to maintain ceramide levels at sufficient concentrations for the production of complex sphingolipids, but which prevents the accumulation of ceramides to levels that trigger apoptosis. Its function is as follows. Component of the serine palmitoyltransferase multisubunit enzyme (SPT) that catalyzes the initial and rate-limiting step in sphingolipid biosynthesis by condensing L-serine and activated acyl-CoA (most commonly palmitoyl-CoA) to form long-chain bases. The SPT complex is composed of SPTLC1, SPTLC2 or SPTLC3 and SPTSSA or SPTSSB. Within this complex, the heterodimer consisting of SPTLC1 and SPTLC2/SPTLC3 forms the catalytic core. The composition of the serine palmitoyltransferase (SPT) complex determines the substrate preference. The SPTLC1-SPTLC2-SPTSSA complex shows a strong preference for C16-CoA substrate, while the SPTLC1-SPTLC3-SPTSSA isozyme uses both C14-CoA and C16-CoA as substrates, with a slight preference for C14-CoA. The SPTLC1-SPTLC2-SPTSSB complex shows a strong preference for C18-CoA substrate, while the SPTLC1-SPTLC3-SPTSSB isozyme displays an ability to use a broader range of acyl-CoAs, without apparent preference. Crucial for adipogenesis. This is Serine palmitoyltransferase 2 from Mus musculus (Mouse).